A 107-amino-acid chain; its full sequence is Small ribosomal subunit protein bS18 (107 aa).

This sequence belongs to the bacterial ribosomal protein bS18 family. In terms of assembly, part of the 30S ribosomal subunit. Forms a tight heterodimer with protein bS6.

In terms of biological role, binds as a heterodimer with protein bS6 to the central domain of the 16S rRNA, where it helps stabilize the platform of the 30S subunit. In Mycoplasmopsis agalactiae (strain NCTC 10123 / CIP 59.7 / PG2) (Mycoplasma agalactiae), this protein is Small ribosomal subunit protein bS18.